A 490-amino-acid chain; its full sequence is Glutamate--tRNA ligase 2 (490 aa).

The short motif at P33–G43 is the 'HIGH' region element. The short motif at K262 to R266 is the 'KMSKS' region element. K265 is an ATP binding site.

This sequence belongs to the class-I aminoacyl-tRNA synthetase family. Glutamate--tRNA ligase type 1 subfamily. In terms of assembly, monomer.

The protein resides in the cytoplasm. It catalyses the reaction tRNA(Glu) + L-glutamate + ATP = L-glutamyl-tRNA(Glu) + AMP + diphosphate. Its function is as follows. Catalyzes the attachment of glutamate to tRNA(Glu) in a two-step reaction: glutamate is first activated by ATP to form Glu-AMP and then transferred to the acceptor end of tRNA(Glu). The protein is Glutamate--tRNA ligase 2 of Parvibaculum lavamentivorans (strain DS-1 / DSM 13023 / NCIMB 13966).